Consider the following 874-residue polypeptide: Alanine--tRNA ligase (874 aa).

Residues His563, His567, Cys665, and His669 each contribute to the Zn(2+) site.

It belongs to the class-II aminoacyl-tRNA synthetase family. Zn(2+) is required as a cofactor.

It is found in the cytoplasm. It catalyses the reaction tRNA(Ala) + L-alanine + ATP = L-alanyl-tRNA(Ala) + AMP + diphosphate. In terms of biological role, catalyzes the attachment of alanine to tRNA(Ala) in a two-step reaction: alanine is first activated by ATP to form Ala-AMP and then transferred to the acceptor end of tRNA(Ala). Also edits incorrectly charged Ser-tRNA(Ala) and Gly-tRNA(Ala) via its editing domain. The chain is Alanine--tRNA ligase from Haemophilus influenzae (strain ATCC 51907 / DSM 11121 / KW20 / Rd).